The sequence spans 226 residues: Triosephosphate isomerase (226 aa).

10–12 provides a ligand contact to substrate; it reads NFK. Histidine 96 serves as the catalytic Electrophile. Glutamate 144 functions as the Proton acceptor in the catalytic mechanism. Substrate is bound by residues isoleucine 149, glycine 184, and 205–206; that span reads AS.

This sequence belongs to the triosephosphate isomerase family. Homotetramer; dimer of dimers.

The protein localises to the cytoplasm. The catalysed reaction is D-glyceraldehyde 3-phosphate = dihydroxyacetone phosphate. The protein operates within carbohydrate biosynthesis; gluconeogenesis. It participates in carbohydrate degradation; glycolysis; D-glyceraldehyde 3-phosphate from glycerone phosphate: step 1/1. Functionally, involved in the gluconeogenesis. Catalyzes stereospecifically the conversion of dihydroxyacetone phosphate (DHAP) to D-glyceraldehyde-3-phosphate (G3P). The protein is Triosephosphate isomerase of Methanopyrus kandleri (strain AV19 / DSM 6324 / JCM 9639 / NBRC 100938).